A 228-amino-acid chain; its full sequence is ATP phosphoribosyltransferase (228 aa).

This sequence belongs to the ATP phosphoribosyltransferase family. Short subfamily. In terms of assembly, heteromultimer composed of HisG and HisZ subunits.

It localises to the cytoplasm. It catalyses the reaction 1-(5-phospho-beta-D-ribosyl)-ATP + diphosphate = 5-phospho-alpha-D-ribose 1-diphosphate + ATP. Its pathway is amino-acid biosynthesis; L-histidine biosynthesis; L-histidine from 5-phospho-alpha-D-ribose 1-diphosphate: step 1/9. Its function is as follows. Catalyzes the condensation of ATP and 5-phosphoribose 1-diphosphate to form N'-(5'-phosphoribosyl)-ATP (PR-ATP). Has a crucial role in the pathway because the rate of histidine biosynthesis seems to be controlled primarily by regulation of HisG enzymatic activity. In Acinetobacter baylyi (strain ATCC 33305 / BD413 / ADP1), this protein is ATP phosphoribosyltransferase.